Reading from the N-terminus, the 173-residue chain is Adenine phosphoribosyltransferase (173 aa).

The protein belongs to the purine/pyrimidine phosphoribosyltransferase family. As to quaternary structure, homodimer.

It localises to the cytoplasm. It carries out the reaction AMP + diphosphate = 5-phospho-alpha-D-ribose 1-diphosphate + adenine. Its pathway is purine metabolism; AMP biosynthesis via salvage pathway; AMP from adenine: step 1/1. Its function is as follows. Catalyzes a salvage reaction resulting in the formation of AMP, that is energically less costly than de novo synthesis. This is Adenine phosphoribosyltransferase from Listeria monocytogenes serotype 4b (strain CLIP80459).